Here is a 185-residue protein sequence, read N- to C-terminus: Threonylcarbamoyl-AMP synthase (185 aa).

In terms of domain architecture, YrdC-like spans 4–185 (SFRAQCAARV…LVTGQVIRPA (182 aa)).

This sequence belongs to the SUA5 family. TsaC subfamily.

Its subcellular location is the cytoplasm. The enzyme catalyses L-threonine + hydrogencarbonate + ATP = L-threonylcarbamoyladenylate + diphosphate + H2O. In terms of biological role, required for the formation of a threonylcarbamoyl group on adenosine at position 37 (t(6)A37) in tRNAs that read codons beginning with adenine. Catalyzes the conversion of L-threonine, HCO(3)(-)/CO(2) and ATP to give threonylcarbamoyl-AMP (TC-AMP) as the acyladenylate intermediate, with the release of diphosphate. This Pseudomonas aeruginosa (strain UCBPP-PA14) protein is Threonylcarbamoyl-AMP synthase.